Consider the following 515-residue polypeptide: Maturase K (515 aa).

This sequence belongs to the intron maturase 2 family. MatK subfamily.

It localises to the plastid. The protein resides in the chloroplast. In terms of biological role, usually encoded in the trnK tRNA gene intron. Probably assists in splicing its own and other chloroplast group II introns. The chain is Maturase K from Picea engelmannii (Engelmann's spruce).